A 455-amino-acid chain; its full sequence is tRNA modification GTPase MnmE (455 aa).

(6S)-5-formyl-5,6,7,8-tetrahydrofolate contacts are provided by Lys29, Glu91, and Arg131. The TrmE-type G domain occupies 226–378 (GLKVALVGLP…LIQELLKLAG (153 aa)). Asn236 is a K(+) binding site. GTP contacts are provided by residues 236 to 241 (NVGKSS), 255 to 261 (TDLPGTT), 280 to 283 (DTAG), and 341 to 344 (NKAD). Ser240 serves as a coordination point for Mg(2+). Thr255, Leu257, and Thr260 together coordinate K(+). Thr261 is a binding site for Mg(2+). Lys455 lines the (6S)-5-formyl-5,6,7,8-tetrahydrofolate pocket.

Belongs to the TRAFAC class TrmE-Era-EngA-EngB-Septin-like GTPase superfamily. TrmE GTPase family. As to quaternary structure, homodimer. Heterotetramer of two MnmE and two MnmG subunits. K(+) is required as a cofactor.

Its subcellular location is the cytoplasm. Exhibits a very high intrinsic GTPase hydrolysis rate. Involved in the addition of a carboxymethylaminomethyl (cmnm) group at the wobble position (U34) of certain tRNAs, forming tRNA-cmnm(5)s(2)U34. This Prochlorococcus marinus (strain SARG / CCMP1375 / SS120) protein is tRNA modification GTPase MnmE.